A 232-amino-acid polypeptide reads, in one-letter code: Thiamine import ATP-binding protein ThiQ (232 aa).

Residues leucine 2–isoleucine 230 enclose the ABC transporter domain. Glycine 32–serine 39 contributes to the ATP binding site.

It belongs to the ABC transporter superfamily. Thiamine importer (TC 3.A.1.19.1) family. As to quaternary structure, the complex is composed of two ATP-binding proteins (ThiQ), two transmembrane proteins (ThiP) and a solute-binding protein (ThiB).

Its subcellular location is the cell inner membrane. The enzyme catalyses thiamine(out) + ATP + H2O = thiamine(in) + ADP + phosphate + H(+). Part of the ABC transporter complex ThiBPQ involved in thiamine import. Responsible for energy coupling to the transport system. This Escherichia coli O6:K15:H31 (strain 536 / UPEC) protein is Thiamine import ATP-binding protein ThiQ.